Here is a 476-residue protein sequence, read N- to C-terminus: Glycogen synthase (476 aa).

Lys15 provides a ligand contact to ADP-alpha-D-glucose.

This sequence belongs to the glycosyltransferase 1 family. Bacterial/plant glycogen synthase subfamily.

The catalysed reaction is [(1-&gt;4)-alpha-D-glucosyl](n) + ADP-alpha-D-glucose = [(1-&gt;4)-alpha-D-glucosyl](n+1) + ADP + H(+). It functions in the pathway glycan biosynthesis; glycogen biosynthesis. Its function is as follows. Synthesizes alpha-1,4-glucan chains using ADP-glucose. In Halalkalibacterium halodurans (strain ATCC BAA-125 / DSM 18197 / FERM 7344 / JCM 9153 / C-125) (Bacillus halodurans), this protein is Glycogen synthase.